Here is a 413-residue protein sequence, read N- to C-terminus: Patatin-like protein 3 (413 aa).

Residues 54–245 (LSVDGGARPE…ALGNPTAAAI (192 aa)) enclose the PNPLA domain. A GGXR motif is present at residues 58–61 (GGAR). The active-site Nucleophile is Ser100. The segment at 384-413 (EHGRRKQHVPPAASGGGGGGLDCHVSKKQP) is disordered.

This sequence belongs to the patatin family.

Its function is as follows. Possesses non-specific lipolytic acyl hydrolase (LAH) activity. Hydrolyzes phospholipids as well as galactolipids. May play a role in disease resistance. The chain is Patatin-like protein 3 (PLP3) from Oryza sativa subsp. indica (Rice).